A 643-amino-acid polypeptide reads, in one-letter code: Pescadillo homolog (643 aa).

The region spanning lysine 319–methionine 412 is the BRCT domain. 3 disordered regions span residues alanine 437–glutamate 475, threonine 492–asparagine 571, and aspartate 609–alanine 643. The span at serine 464–glutamate 475 shows a compositional bias: acidic residues. Positions threonine 492 to glutamine 518 are enriched in basic and acidic residues. Residues glycine 524–aspartate 544 are compositionally biased toward acidic residues. Residues arginine 569–alanine 643 adopt a coiled-coil conformation. The segment covering aspartate 609–lysine 635 has biased composition (basic and acidic residues).

The protein belongs to the pescadillo family.

The protein localises to the nucleus. It localises to the nucleolus. The protein resides in the nucleoplasm. Required for maturation of ribosomal RNAs and formation of the large ribosomal subunit. The chain is Pescadillo homolog from Anopheles gambiae (African malaria mosquito).